The sequence spans 238 residues: Small ribosomal subunit protein uS3 (238 aa).

Positions 39–109 (IRTFINQQLA…TIKVNVVEVN (71 aa)) constitute a KH type-2 domain. Residues 215–238 (EAVPREATRRSPQRRLPQFENRSN) are disordered.

It belongs to the universal ribosomal protein uS3 family. As to quaternary structure, part of the 30S ribosomal subunit. Forms a tight complex with proteins S10 and S14.

In terms of biological role, binds the lower part of the 30S subunit head. Binds mRNA in the 70S ribosome, positioning it for translation. The sequence is that of Small ribosomal subunit protein uS3 from Thermosynechococcus vestitus (strain NIES-2133 / IAM M-273 / BP-1).